Consider the following 138-residue polypeptide: Small ribosomal subunit protein uS11c (138 aa).

Residues 1-22 (MAKAIPKISSRRNGRIGSRKGA) form a disordered region. The span at 9-22 (SSRRNGRIGSRKGA) shows a compositional bias: basic residues.

Belongs to the universal ribosomal protein uS11 family. In terms of assembly, part of the 30S ribosomal subunit.

The protein resides in the plastid. Its subcellular location is the chloroplast. The sequence is that of Small ribosomal subunit protein uS11c from Nicotiana tomentosiformis (Tobacco).